Here is a 496-residue protein sequence, read N- to C-terminus: MTPKSAALVDDLVSILKSVQTKRSAKGFLKKLFPQPNEDATPSSTHQAPPVRLAVTKLAGVETIADDTLFGIGKTIQRMSRLGMQSIIVPSMSTPTGLSACFASGKCASLAQVNELREQLRTQELSQLDRVSDILCQAGVLARPSYGTLYASNADGVSLEAQRLLLETLQNGYTSVIGNSVVNPGLCLTQITPDQVVLGVVRSFAQMKSNVSVERLIVIDEVGGMPCPRRSHGSSHVLINLAQEYVSLWPTLSPKHAENLQLVNSCLDLLPHSAAAIVTTPDAAVFNGSTRQSHPIIHNILTDRTVFSCSLPVDRSPETKTTLLRRGTPIYMYHGTDCLTNGSVSWDRIWYLLNDSFQRVFDMPRYLERIRHNLALVIVAGDYEGVAIITLEQPQTPGAAPVPYLDKLAVLQKVQGTSAIADFVFNAMCSVFSQEIVWRSRLDNPVNKWYFERSRGSLLSRSTPWRLFWTGYKSADQKRIQEYLDVIDSIQPTWIK.

In terms of domain architecture, N-acetyltransferase spans 333–493; the sequence is YHGTDCLTNG…LDVIDSIQPT (161 aa).

It belongs to the acetyltransferase family.

The protein resides in the mitochondrion. The catalysed reaction is L-glutamate + acetyl-CoA = N-acetyl-L-glutamate + CoA + H(+). The protein operates within amino-acid biosynthesis; L-arginine biosynthesis; N(2)-acetyl-L-ornithine from L-glutamate: step 1/4. In terms of biological role, N-acetylglutamate synthase involved in arginine biosynthesis. This chain is Amino-acid acetyltransferase, mitochondrial (arg2), found in Schizosaccharomyces japonicus (strain yFS275 / FY16936) (Fission yeast).